The primary structure comprises 749 residues: Protein lin-54 homolog (749 aa).

A Glycyl lysine isopeptide (Lys-Gly) (interchain with G-Cter in SUMO2) cross-link involves residue Lys139. N6-acetyllysine is present on residues Lys244 and Lys249. Phosphoserine occurs at positions 264, 282, 310, and 314. Residue Lys357 forms a Glycyl lysine isopeptide (Lys-Gly) (interchain with G-Cter in SUMO2) linkage. Positions 369-388 (ASSSTQPVSQNPSTNTQPLQ) are disordered. A CRC domain is found at 521–634 (PRKPCNCTKS…KCIGCKNFEE (114 aa)). The DNA-binding stretch occupies residues 523–536 (KPCNCTKSLCLKLY). Residues Cys525, Cys527, Cys532, Cys537, Cys539, Cys546, Cys549, Cys551, and Cys554 each contribute to the Zn(2+) site. Residues 583 to 596 (IGKGKEGESDRRHS) form a linker region. Zn(2+)-binding residues include Cys599, Cys601, Cys606, Cys611, Cys613, Cys620, Cys624, Cys626, and Cys629. Positions 599-612 (CNCKRSGCLKNYCE) are DNA-binding. Position 635 is a phosphoserine (Ser635). Residues Lys639, Lys659, and Lys661 each participate in a glycyl lysine isopeptide (Lys-Gly) (interchain with G-Cter in SUMO2) cross-link.

It belongs to the lin-54 family. In terms of assembly, component of the DREAM complex (also named LINC complex) at least composed of E2F4, E2F5, LIN9, LIN37, LIN52, LIN54, MYBL1, MYBL2, RBL1, RBL2, RBBP4, TFDP1 and TFDP2. The complex exists in quiescent cells where it represses cell cycle-dependent genes. It dissociates in S phase when LIN9, LIN37, LIN52 and LIN54 form a subcomplex that binds to MYBL2.

Its subcellular location is the nucleus. In terms of biological role, component of the DREAM complex, a multiprotein complex that can both act as a transcription activator or repressor depending on the context. In G0 phase, the complex binds to more than 800 promoters and is required for repression of E2F target genes. In S phase, the complex selectively binds to the promoters of G2/M genes whose products are required for mitosis and participates in their cell cycle dependent activation. In the complex, acts as a DNA-binding protein that binds the promoter of CDK1 in a sequence-specific manner. Specifically recognizes the consensus motif 5'-TTYRAA-3' in target DNA. The chain is Protein lin-54 homolog (LIN54) from Homo sapiens (Human).